A 550-amino-acid chain; its full sequence is Enhanced filamentous growth protein 1 (550 aa).

Disordered stretches follow at residues 17–48 (NNGM…SQQQ), 72–95 (QGQP…QQQQ), and 123–182 (QLSQ…QPTP). Residues 123-153 (QLSQPQPQHYNGSNRNYTSAPSGAPIPSNST) are compositionally biased toward polar residues. 2 positions are modified to phosphothreonine: Thr181 and Thr208. Residues 206-312 (RVTTTMWEDE…RDIKRVIQTG (107 aa)) enclose the HTH APSES-type domain. The segment at residues 240 to 261 (GTKLLNVAQMTRGRRDGILKSE) is a DNA-binding region (H-T-H motif). Disordered regions lie at residues 329 to 435 (TSAS…STTN) and 476 to 550 (SSYP…KEEK). The span at 342–383 (AAATTTAATAISKSSSGNGNSISATSGGSNVSGASGAGSTTS) shows a compositional bias: low complexity. Over residues 384-394 (PVNTKAATTAG) the composition is skewed to polar residues. The segment covering 395–416 (TPQGNYYQTYNQQQYPQQYGQY) has biased composition (low complexity). Residues 420 to 435 (GKNQNTPASQPGSTTN) show a composition bias toward polar residues. Positions 476–502 (SSYPYQQQQQKQQQQQPNQQQQSDQQQ) are enriched in low complexity. The segment covering 514 to 544 (SVHQSPQVQSLTQGSVHPSPQQHQANQSAST) has biased composition (polar residues).

It belongs to the EFG1/PHD1/stuA family. Interacts with CZF1 and FLO8. In terms of processing, thr-208 is a phosphorylation target to promote hyphal induction by a subset of environmental cues. Phosphorylation at Thr-181 by the CDc28/HGC1 complex represses cell separation genes and leads to hyphal chain formation.

Its subcellular location is the nucleus. Its function is as follows. Transcriptional regulator of the switch between 2 heritable states, the white and opaque states. These 2 cell types differ in many characteristics, including cell structure, mating competence, and virulence. Each state is heritable for many generations, and switching between states occurs stochastically, at low frequency. Antagonizes the action of WOR1, WOR2 and CZF1, and promotes the white state. In white cells, EFG1 represses WOR1 indirectly through WOR2 to maintain white cell identity. Binds target gene promoters at the EFG1 recognition sequence (EGRbox) TATGCATA. Acts as a major regulator of cell wall dynamics and plays a role in interactions with extracellular matrices. Required for TOR1-dependent cellular aggregation and adhesin expression. Required for both normoxic and hypoxic biofilm formation. Hypoxic biofilm formation is a major cause of perseverance and antifungal resistance during infections. Contributes to virulence by regulating hyphal formation and the factors that enable C.albicans to invade and injure endothelial cells. Required for the formation of thick-walled big resting spores called chlamydospores, which survive in unfavorable conditions. Mediates the expression of virulence factors SAP4, SAP5and SAP6 during infection. Involved in drug resistance by regulating the expression of ERG3. The chain is Enhanced filamentous growth protein 1 (EFG1) from Candida albicans (strain SC5314 / ATCC MYA-2876) (Yeast).